A 157-amino-acid polypeptide reads, in one-letter code: Mediator of RNA polymerase II transcription subunit 10 (157 aa).

It belongs to the Mediator complex subunit 10 family. Component of the Mediator complex, which is composed of at least 21 subunits that form three structurally distinct submodules. The Mediator head module contains MED6, MED8, MED11, SRB4/MED17, SRB5/MED18, ROX3/MED19, SRB2/MED20 and SRB6/MED22, the middle module contains MED1, MED4, NUT1/MED5, MED7, CSE2/MED9, NUT2/MED10, SRB7/MED21 and SOH1/MED31, and the tail module contains MED2, PGD1/MED3, RGR1/MED14, GAL11/MED15 and SIN4/MED16. The head and the middle modules interact directly with RNA polymerase II, whereas the elongated tail module interacts with gene-specific regulatory proteins. NUT2/MED10 interacts directly with SRB7/MED21.

It localises to the nucleus. Functionally, component of the Mediator complex, a coactivator involved in the regulated transcription of nearly all RNA polymerase II-dependent genes. Mediator functions as a bridge to convey information from gene-specific regulatory proteins to the basal RNA polymerase II transcription machinery. The Mediator complex, having a compact conformation in its free form, is recruited to promoters by direct interactions with regulatory proteins and serves for the assembly of a functional preinitiation complex with RNA polymerase II and the general transcription factors. The Mediator complex unfolds to an extended conformation and partially surrounds RNA polymerase II, specifically interacting with the unphosphorylated form of the C-terminal domain (CTD) of RNA polymerase II. The Mediator complex dissociates from the RNA polymerase II holoenzyme and stays at the promoter when transcriptional elongation begins. This Saccharomyces cerevisiae (strain ATCC 204508 / S288c) (Baker's yeast) protein is Mediator of RNA polymerase II transcription subunit 10 (NUT2).